The primary structure comprises 178 residues: Caveolin-1 (178 aa).

Serine 2 carries the post-translational modification N-acetylserine. Phosphoserine is present on serine 2. A required for homooligomerization region spans residues 2–94; the sequence is SGGKYVDSEG…WKASFTTFTV (93 aa). The Cytoplasmic portion of the chain corresponds to 2 to 104; that stretch reads SGGKYVDSEG…TKYWFYRLLS (103 aa). Residue lysine 5 is modified to N6-acetyllysine; alternate. Residue lysine 5 forms a Glycyl lysine isopeptide (Lys-Gly) (interchain with G-Cter in ubiquitin); alternate linkage. Tyrosine 6 bears the Phosphotyrosine mark. Residue serine 9 is modified to Phosphoserine. Residue tyrosine 14 is modified to Phosphotyrosine; by ABL1. A Phosphotyrosine modification is found at tyrosine 25. Residues lysine 26, lysine 30, lysine 39, lysine 47, and lysine 57 each participate in a glycyl lysine isopeptide (Lys-Gly) (interchain with G-Cter in ubiquitin) cross-link. An interaction with CAVIN3 region spans residues 82-94; sequence DGIWKASFTTFTV. The segment at residues 105–125 is an intramembrane region (helical); that stretch reads AVFGIPMALIWGIYFAIVSFL. The Cytoplasmic segment spans residues 126-178; the sequence is HIWVVVPYIKSFLIEIQCISRVYSIYIHTFCDPLFEAFGKVFSNIRINTQKEI. An interacts with SPRY1, SPRY2, SPRY3 and SPRY4 region spans residues 131–142; it reads VPYIKSFLIEIQ. Residues cysteine 143 and cysteine 156 are each lipidated (S-palmitoyl cysteine). The segment at 149–160 is interacts with SPRY1, SPRY2, and SPRY4; the sequence is SIYIHTFCDPLF. The interval 167–178 is interacts with SPRY1, SPRY2, SPRY3 and SPRY4; sequence FSNIRINTQKEI.

The protein belongs to the caveolin family. Homooligomer. Interacts (via the N-terminus) with DPP4; the interaction is direct. Forms a stable heterooligomeric complex with CAV2 that targets to lipid rafts and drives caveolae formation. Interacts with PACSIN2; this interaction induces membrane tubulation. Interacts with BMX, BTK, CTNNB1, CDH1, GLIPR2, JUP, NOSTRIN, SNAP25 and STX1A. Interacts with SLC7A9. Interacts with TGFBR1. Interacts with CAVIN3 (via leucine-zipper domain) in a cholesterol-sensitive manner. Interacts with CAVIN1. Interacts with EHD2 in a cholesterol-dependent manner. Forms a ternary complex with UBXN6 and VCP; mediates CAV1 targeting to lysosomes for degradation. Interacts with ABCG1; this interaction regulates ABCG1-mediated cholesterol efflux. Interacts with NEU3; this interaction enhances NEU3 sialidase activity within caveola. Interacts (via C-terminus) with SPRY1, SPRY2 (via C-terminus), SPRY3, and SPRY4. Phosphorylated at Tyr-14 by ABL1 in response to oxidative stress. Post-translationally, ubiquitinated. Undergo monoubiquitination and multi- and/or polyubiquitination. Monoubiquitination of N-terminal lysines promotes integration in a ternary complex with UBXN6 and VCP which promotes oligomeric CAV1 targeting to lysosomes for degradation. Ubiquitinated by ZNRF1; leading to degradation and modulation of the TLR4-mediated immune response.

The protein localises to the golgi apparatus membrane. The protein resides in the cell membrane. It is found in the membrane. It localises to the caveola. Its subcellular location is the membrane raft. May act as a scaffolding protein within caveolar membranes. Forms a stable heterooligomeric complex with CAV2 that targets to lipid rafts and drives caveolae formation. Mediates the recruitment of CAVIN proteins (CAVIN1/2/3/4) to the caveolae. Interacts directly with G-protein alpha subunits and can functionally regulate their activity. Involved in the costimulatory signal essential for T-cell receptor (TCR)-mediated T-cell activation. Its binding to DPP4 induces T-cell proliferation and NF-kappa-B activation in a T-cell receptor/CD3-dependent manner. Recruits CTNNB1 to caveolar membranes and may regulate CTNNB1-mediated signaling through the Wnt pathway. Negatively regulates TGFB1-mediated activation of SMAD2/3 by mediating the internalization of TGFBR1 from membrane rafts leading to its subsequent degradation. Binds 20(S)-hydroxycholesterol (20(S)-OHC). The chain is Caveolin-1 (CAV1) from Rhinolophus ferrumequinum (Greater horseshoe bat).